A 418-amino-acid polypeptide reads, in one-letter code: Lactosylceramide alpha-2,3-sialyltransferase (418 aa).

Residues 1 to 25 (MRTKAAGCAERRPLQPRTEAAAAPA) form a disordered region. Topologically, residues 1–61 (MRTKAAGCAE…RAQSKMRRPS (61 aa)) are cytoplasmic. A helical; Signal-anchor for type II membrane protein transmembrane segment spans residues 62–82 (LLLKDILKCTLLVFGVWILYI). At 83–418 (LKLNYTTEEC…DLSGGIDREF (336 aa)) the chain is on the lumenal side. N-linked (GlcNAc...) asparagine glycans are attached at residues Asn-86, Asn-236, and Asn-390. Residues Cys-195 and Cys-353 are joined by a disulfide bond.

It belongs to the glycosyltransferase 29 family. In terms of processing, N-glycosylated. In terms of tissue distribution, ubiquitous. High expression in brain, skeletal muscle, placenta, and testis. mRNA widely distributed in human brain, but slightly elevated expression was observed in the cerebral cortex, temporal lobe, and putamen.

It is found in the golgi apparatus membrane. It carries out the reaction a beta-D-Gal-(1-&gt;4)-beta-D-Glc-(1&lt;-&gt;1)-Cer(d18:1(4E)) + CMP-N-acetyl-beta-neuraminate = a ganglioside GM3 (d18:1(4E)) + CMP + H(+). The catalysed reaction is ganglioside GA2 (d18:1(4E)/18:0) + CMP-N-acetyl-beta-neuraminate = ganglioside GM2 (d18:1(4E)/18:0) + CMP + H(+). It catalyses the reaction a beta-D-Gal-(1&lt;-&gt;1')-ceramide + CMP-N-acetyl-beta-neuraminate = N-acetyl-alpha-neuraminosyl-(2-&gt;3)-beta-D-galactosyl-(1&lt;-&gt;1')-ceramide + CMP + H(+). The enzyme catalyses a beta-D-galactosyl-(1&lt;-&gt;1')-N-acylsphing-4-enine + CMP-N-acetyl-beta-neuraminate = a ganglioside GM4 (d18:1(4E)) + CMP + H(+). It carries out the reaction ganglioside GA1 (d18:1(4E)/18:0) + CMP-N-acetyl-beta-neuraminate = ganglioside GM1 (d18:1(4E)/18:0) + CMP + H(+). The protein operates within glycolipid biosynthesis. Its function is as follows. Transfers the sialyl group (N-acetyl-alpha-neuraminyl or NeuAc) from CMP-NeuAc to the non-reducing terminal galactose (Gal) of glycosphingolipids forming gangliosides (important molecules involved in the regulation of multiple cellular processes, including cell proliferation and differentiation, apoptosis, embryogenesis, development, and oncogenesis). Mainly involved in the biosynthesis of ganglioside GM3 but can also use different glycolipids as substrate acceptors such as D-galactosylceramide (GalCer), asialo-GM2 (GA2) and asialo-GM1 (GA1), although less preferentially than beta-D-Gal-(1-&gt;4)-beta-D-Glc-(1&lt;-&gt;1)-Cer (LacCer). This Homo sapiens (Human) protein is Lactosylceramide alpha-2,3-sialyltransferase (ST3GAL5).